Here is a 216-residue protein sequence, read N- to C-terminus: Protein ADP-ribose pyrophosphatase ORF38 (216 aa).

In terms of domain architecture, Nudix hydrolase spans 1 to 177; sequence MRNAAGLFMI…DYSNYIEFFD (177 aa). Positions 48 to 70 match the Nudix box motif; the sequence is GHRDCCDAKVYETAVREFVEETG.

The protein localises to the host cytoplasm. It is found in the host nucleus. It catalyses the reaction ADP-D-ribose + H2O = D-ribose 5-phosphate + AMP + 2 H(+). Functionally, plays an important role in virus replication most probably through its hydrolyzing ADP-ribose activity in host cells. May function in viral DNA replication or transcription directly, or by removing toxic substances or metabolic intermediates. In Lepidoptera (butterflies and moths), this protein is Protein ADP-ribose pyrophosphatase ORF38.